We begin with the raw amino-acid sequence, 417 residues long: Serine hydroxymethyltransferase (417 aa).

Residues leucine 122 and 126–128 (GHL) each bind (6S)-5,6,7,8-tetrahydrofolate. Position 230 is an N6-(pyridoxal phosphate)lysine (lysine 230). (6S)-5,6,7,8-tetrahydrofolate is bound at residue 355–357 (SPF).

This sequence belongs to the SHMT family. As to quaternary structure, homodimer. Pyridoxal 5'-phosphate serves as cofactor.

It is found in the cytoplasm. It carries out the reaction (6R)-5,10-methylene-5,6,7,8-tetrahydrofolate + glycine + H2O = (6S)-5,6,7,8-tetrahydrofolate + L-serine. The protein operates within one-carbon metabolism; tetrahydrofolate interconversion. Its pathway is amino-acid biosynthesis; glycine biosynthesis; glycine from L-serine: step 1/1. In terms of biological role, catalyzes the reversible interconversion of serine and glycine with tetrahydrofolate (THF) serving as the one-carbon carrier. This reaction serves as the major source of one-carbon groups required for the biosynthesis of purines, thymidylate, methionine, and other important biomolecules. Also exhibits THF-independent aldolase activity toward beta-hydroxyamino acids, producing glycine and aldehydes, via a retro-aldol mechanism. This is Serine hydroxymethyltransferase from Francisella tularensis subsp. novicida (strain U112).